The sequence spans 201 residues: Holliday junction branch migration complex subunit RuvA (201 aa).

A domain I region spans residues 1–63 (MISHFSGTVS…EESLTLYGFV (63 aa)). The tract at residues 64-142 (EADDRDAFEL…ALAPRGASAS (79 aa)) is domain II. The flexible linker stretch occupies residues 143–153 (GATHVAAPWRE). Residues 153–201 (EQVAEGLVGLGWSTKDAEKAVDKVVALKEADPAMSIGNLMRAALRSLAR) are domain III.

This sequence belongs to the RuvA family. Homotetramer. Forms an RuvA(8)-RuvB(12)-Holliday junction (HJ) complex. HJ DNA is sandwiched between 2 RuvA tetramers; dsDNA enters through RuvA and exits via RuvB. An RuvB hexamer assembles on each DNA strand where it exits the tetramer. Each RuvB hexamer is contacted by two RuvA subunits (via domain III) on 2 adjacent RuvB subunits; this complex drives branch migration. In the full resolvosome a probable DNA-RuvA(4)-RuvB(12)-RuvC(2) complex forms which resolves the HJ.

It is found in the cytoplasm. Functionally, the RuvA-RuvB-RuvC complex processes Holliday junction (HJ) DNA during genetic recombination and DNA repair, while the RuvA-RuvB complex plays an important role in the rescue of blocked DNA replication forks via replication fork reversal (RFR). RuvA specifically binds to HJ cruciform DNA, conferring on it an open structure. The RuvB hexamer acts as an ATP-dependent pump, pulling dsDNA into and through the RuvAB complex. HJ branch migration allows RuvC to scan DNA until it finds its consensus sequence, where it cleaves and resolves the cruciform DNA. This is Holliday junction branch migration complex subunit RuvA from Cutibacterium acnes (strain DSM 16379 / KPA171202) (Propionibacterium acnes).